A 1228-amino-acid chain; its full sequence is Structural maintenance of chromosomes protein 1 (1228 aa).

Residue 32–39 (GPNGAGKS) participates in ATP binding. Residues 197 to 510 (NKKRGINAEL…ESKQDAKKRE (314 aa)) are a coiled coil. The 114-residue stretch at 522–635 (VKGRIIDLCT…CDSMTVARDL (114 aa)) folds into the SMC hinge domain. Coiled coils occupy residues 710–783 (KLHS…KIFS), 814–926 (EFTK…EIDR), and 984–1068 (VEVD…KRLQ).

This sequence belongs to the SMC family. SMC1 subfamily. Cohesin complexes are composed of the psm1/smc1 and psm3/smc3 heterodimer attached via their SMC hinge domain, rad21/scc1 which link them, and psc3/scc3, which interacts with rad21.

The protein resides in the nucleus. It is found in the chromosome. Its function is as follows. Involved in chromosome cohesion during cell cycle and in DNA repair. Central component of cohesin complex. The cohesin complex is required for the cohesion of sister chromatids after DNA replication. The cohesin complex apparently forms a large proteinaceous ring within which sister chromatids can be trapped. At anaphase, the complex is cleaved and dissociates from chromatin, allowing sister chromatids to segregate. The polypeptide is Structural maintenance of chromosomes protein 1 (psm1) (Schizosaccharomyces pombe (strain 972 / ATCC 24843) (Fission yeast)).